The sequence spans 1030 residues: Isoleucine--tRNA ligase 2 (1030 aa).

The short motif at 48-58 (PFATGLPHYGH) is the 'HIGH' region element. The 'KMSKS' region motif lies at 589–593 (KMSKR). Lys-592 is a binding site for ATP.

This sequence belongs to the class-I aminoacyl-tRNA synthetase family. IleS type 2 subfamily. Monomer. It depends on Zn(2+) as a cofactor.

It localises to the cytoplasm. It carries out the reaction tRNA(Ile) + L-isoleucine + ATP = L-isoleucyl-tRNA(Ile) + AMP + diphosphate. Functionally, catalyzes the attachment of isoleucine to tRNA(Ile). As IleRS can inadvertently accommodate and process structurally similar amino acids such as valine, to avoid such errors it has two additional distinct tRNA(Ile)-dependent editing activities. One activity is designated as 'pretransfer' editing and involves the hydrolysis of activated Val-AMP. The other activity is designated 'posttransfer' editing and involves deacylation of mischarged Val-tRNA(Ile). In terms of biological role, confers high-level resistance to the antibiotic mupirocin (pseudomonic acid A), an Ile-analog produced by P.fluorescens NCIMB 10586 itself that competitively inhibits activation by Ile-tRNA synthetase, thus inhibiting protein biosynthesis. The sequence is that of Isoleucine--tRNA ligase 2 (ileS2) from Pseudomonas fluorescens.